The sequence spans 66 residues: Large ribosomal subunit protein bL35 (66 aa).

The span at 1-26 (MPKMKTHRGSAKRFKKTGSGKLKRSH) shows a compositional bias: basic residues. The tract at residues 1-48 (MPKMKTHRGSAKRFKKTGSGKLKRSHAYTSHLFANKSQKQKRKLRKSA) is disordered.

It belongs to the bacterial ribosomal protein bL35 family.

The chain is Large ribosomal subunit protein bL35 from Bacillus licheniformis (strain ATCC 14580 / DSM 13 / JCM 2505 / CCUG 7422 / NBRC 12200 / NCIMB 9375 / NCTC 10341 / NRRL NRS-1264 / Gibson 46).